Here is a 93-residue protein sequence, read N- to C-terminus: Acyl carrier protein AcpXL (93 aa).

A Carrier domain is found at 2–88 (SSTFDKVADI…NLCAKIDELV (87 aa)). Ser-37 carries the post-translational modification O-(pantetheine 4'-phosphoryl)serine.

Post-translationally, 4'-phosphopantetheine is transferred from CoA to a specific serine of apo-ACP by AcpS. This modification is essential for activity because fatty acids are bound in thioester linkage to the sulfhydryl of the prosthetic group.

Its subcellular location is the cytoplasm. Its pathway is glycolipid biosynthesis; KDO(2)-lipid A biosynthesis. Functionally, carrier of the growing fatty acid chain in fatty acid biosynthesis. Is involved in the transfer of long hydroxylated fatty acids to lipid A. The protein is Acyl carrier protein AcpXL (acpXL) of Brucella melitensis biotype 1 (strain ATCC 23456 / CCUG 17765 / NCTC 10094 / 16M).